We begin with the raw amino-acid sequence, 34 residues long: Photosystem II reaction center protein Psb30 (34 aa).

Residues 6-26 (VVFQLMALFFVLAAGPAVVVL) form a helical membrane-spanning segment.

The protein belongs to the Psb30/Ycf12 family. As to quaternary structure, PSII is composed of 1 copy each of membrane proteins PsbA, PsbB, PsbC, PsbD, PsbE, PsbF, PsbH, PsbI, PsbJ, PsbK, PsbL, PsbM, PsbT, PsbX, PsbY, PsbZ, Psb30/Ycf12, peripheral proteins of the oxygen-evolving complex and a large number of cofactors. It forms dimeric complexes.

Its subcellular location is the plastid. The protein localises to the chloroplast thylakoid membrane. In terms of biological role, a core subunit of photosystem II (PSII), probably helps stabilize the reaction center. The protein is Photosystem II reaction center protein Psb30 of Stigeoclonium helveticum (Green alga).